Here is a 318-residue protein sequence, read N- to C-terminus: Tyrosine recombinase XerD (318 aa).

One can recognise a Core-binding (CB) domain in the interval 5 to 90 (PSDAKLTGLF…AMRHLYRFLL (86 aa)). Positions 111 to 310 (GLPKVLSIAD…VEERLKSLVR (200 aa)) constitute a Tyr recombinase domain. Active-site residues include arginine 161, lysine 185, histidine 262, arginine 265, and histidine 288. The O-(3'-phospho-DNA)-tyrosine intermediate role is filled by tyrosine 297.

The protein belongs to the 'phage' integrase family. XerD subfamily. In terms of assembly, forms a cyclic heterotetrameric complex composed of two molecules of XerC and two molecules of XerD.

It is found in the cytoplasm. In terms of biological role, site-specific tyrosine recombinase, which acts by catalyzing the cutting and rejoining of the recombining DNA molecules. The XerC-XerD complex is essential to convert dimers of the bacterial chromosome into monomers to permit their segregation at cell division. It also contributes to the segregational stability of plasmids. The protein is Tyrosine recombinase XerD of Bradyrhizobium diazoefficiens (strain JCM 10833 / BCRC 13528 / IAM 13628 / NBRC 14792 / USDA 110).